The sequence spans 296 residues: Telomere repeat-binding factor 4 (296 aa).

One can recognise an HTH myb-type domain in the interval 1–62 (MGNQKLKWTA…WRNLSVAPGI (62 aa)). Residues 28-58 (WKNILRDPELAEQLSSRSNIDLKDKWRNLSV) constitute a DNA-binding region (H-T-H motif). An H15 domain is found at 126–200 (NAPRYDGMIF…STQNFYKMND (75 aa)). The segment at 197-232 (KMNDNSLVQRTPHVARPKESNTKSRQQTNSQGPSIS) is disordered. The span at 219 to 232 (KSRQQTNSQGPSIS) shows a compositional bias: polar residues. Positions 245–282 (KLVEVENKLDVSKGAAEEIERLMKLAEEADEMLVIARE) form a coiled coil.

The protein belongs to the histone H1/H5 family. SMH subfamily.

It localises to the nucleus. The protein resides in the chromosome. Its function is as follows. Binds preferentially double-stranded telomeric repeats. The polypeptide is Telomere repeat-binding factor 4 (Arabidopsis thaliana (Mouse-ear cress)).